The chain runs to 344 residues: Holliday junction branch migration complex subunit RuvB (344 aa).

Residues 1–183 (MLDERLISSH…FGISCRLDFY (183 aa)) are large ATPase domain (RuvB-L). Residues isoleucine 22, arginine 23, glycine 64, lysine 67, threonine 68, threonine 69, 130–132 (EDY), arginine 173, tyrosine 183, and arginine 220 each bind ATP. Threonine 68 is a binding site for Mg(2+). The small ATPAse domain (RuvB-S) stretch occupies residues 184–254 (TPLELSEIIL…LAKWALEMLE (71 aa)). The head domain (RuvB-H) stretch occupies residues 257 to 344 (ECGLDVMDRM…LEGKGLFSDA (88 aa)). 2 residues coordinate DNA: lysine 312 and arginine 317.

It belongs to the RuvB family. As to quaternary structure, homohexamer. Forms an RuvA(8)-RuvB(12)-Holliday junction (HJ) complex. HJ DNA is sandwiched between 2 RuvA tetramers; dsDNA enters through RuvA and exits via RuvB. An RuvB hexamer assembles on each DNA strand where it exits the tetramer. Each RuvB hexamer is contacted by two RuvA subunits (via domain III) on 2 adjacent RuvB subunits; this complex drives branch migration. In the full resolvosome a probable DNA-RuvA(4)-RuvB(12)-RuvC(2) complex forms which resolves the HJ.

The protein localises to the cytoplasm. It carries out the reaction ATP + H2O = ADP + phosphate + H(+). The RuvA-RuvB-RuvC complex processes Holliday junction (HJ) DNA during genetic recombination and DNA repair, while the RuvA-RuvB complex plays an important role in the rescue of blocked DNA replication forks via replication fork reversal (RFR). RuvA specifically binds to HJ cruciform DNA, conferring on it an open structure. The RuvB hexamer acts as an ATP-dependent pump, pulling dsDNA into and through the RuvAB complex. RuvB forms 2 homohexamers on either side of HJ DNA bound by 1 or 2 RuvA tetramers; 4 subunits per hexamer contact DNA at a time. Coordinated motions by a converter formed by DNA-disengaged RuvB subunits stimulates ATP hydrolysis and nucleotide exchange. Immobilization of the converter enables RuvB to convert the ATP-contained energy into a lever motion, pulling 2 nucleotides of DNA out of the RuvA tetramer per ATP hydrolyzed, thus driving DNA branch migration. The RuvB motors rotate together with the DNA substrate, which together with the progressing nucleotide cycle form the mechanistic basis for DNA recombination by continuous HJ branch migration. Branch migration allows RuvC to scan DNA until it finds its consensus sequence, where it cleaves and resolves cruciform DNA. The sequence is that of Holliday junction branch migration complex subunit RuvB from Syntrophomonas wolfei subsp. wolfei (strain DSM 2245B / Goettingen).